Consider the following 156-residue polypeptide: ATP synthase subunit b (156 aa).

The chain crosses the membrane as a helical span at residues leucine 7 to leucine 29.

Belongs to the ATPase B chain family. As to quaternary structure, F-type ATPases have 2 components, F(1) - the catalytic core - and F(0) - the membrane proton channel. F(1) has five subunits: alpha(3), beta(3), gamma(1), delta(1), epsilon(1). F(0) has three main subunits: a(1), b(2) and c(10-14). The alpha and beta chains form an alternating ring which encloses part of the gamma chain. F(1) is attached to F(0) by a central stalk formed by the gamma and epsilon chains, while a peripheral stalk is formed by the delta and b chains.

It is found in the cell inner membrane. Its function is as follows. F(1)F(0) ATP synthase produces ATP from ADP in the presence of a proton or sodium gradient. F-type ATPases consist of two structural domains, F(1) containing the extramembraneous catalytic core and F(0) containing the membrane proton channel, linked together by a central stalk and a peripheral stalk. During catalysis, ATP synthesis in the catalytic domain of F(1) is coupled via a rotary mechanism of the central stalk subunits to proton translocation. Component of the F(0) channel, it forms part of the peripheral stalk, linking F(1) to F(0). The sequence is that of ATP synthase subunit b from Shewanella pealeana (strain ATCC 700345 / ANG-SQ1).